A 295-amino-acid chain; its full sequence is Pyridoxal 5'-phosphate synthase subunit PdxS (295 aa).

Residue D25 coordinates D-ribose 5-phosphate. The active-site Schiff-base intermediate with D-ribose 5-phosphate is K82. D-ribose 5-phosphate is bound at residue G154. R166 contacts D-glyceraldehyde 3-phosphate. D-ribose 5-phosphate-binding positions include G215 and 236-237; that span reads GS.

Belongs to the PdxS/SNZ family. As to quaternary structure, in the presence of PdxT, forms a dodecamer of heterodimers.

It catalyses the reaction aldehydo-D-ribose 5-phosphate + D-glyceraldehyde 3-phosphate + L-glutamine = pyridoxal 5'-phosphate + L-glutamate + phosphate + 3 H2O + H(+). It functions in the pathway cofactor biosynthesis; pyridoxal 5'-phosphate biosynthesis. In terms of biological role, catalyzes the formation of pyridoxal 5'-phosphate from ribose 5-phosphate (RBP), glyceraldehyde 3-phosphate (G3P) and ammonia. The ammonia is provided by the PdxT subunit. Can also use ribulose 5-phosphate and dihydroxyacetone phosphate as substrates, resulting from enzyme-catalyzed isomerization of RBP and G3P, respectively. The polypeptide is Pyridoxal 5'-phosphate synthase subunit PdxS (Haemophilus ducreyi (strain 35000HP / ATCC 700724)).